Reading from the N-terminus, the 373-residue chain is Putative C-P lyase subunit protein HtxH (373 aa).

Belongs to the PhnI family.

Functionally, belongs to an operon involved in hypophosphite oxidation. Exact function not known. This chain is Putative C-P lyase subunit protein HtxH (htxH), found in Stutzerimonas stutzeri (Pseudomonas stutzeri).